Here is a 2230-residue protein sequence, read N- to C-terminus: Golgin subfamily A member 4 (2230 aa).

Positions 1-64 (MFKKLKQKIS…SGDTQSFAQK (64 aa)) are disordered. Residue Ser-10 is modified to Phosphoserine. Residues 12–41 (EQQQLQQALAPAQASSNSSTPTRMRSRTSS) show a composition bias toward low complexity. Position 39 is a phosphothreonine (Thr-39). A phosphoserine mark is found at Ser-41, Ser-71, Ser-78, and Ser-89. Positions 87–107 (SSSKESLVRTSSRESLNRLDL) are enriched in basic and acidic residues. The interval 87–127 (SSSKESLVRTSSRESLNRLDLDSSTASFDPPSDMDSEAEDL) is disordered. An interaction with MACF1 region spans residues 133–203 (SLNKEQLIQR…EELQMDQQAK (71 aa)). The stretch at 133 to 2185 (SLNKEQLIQR…EYLRKVLFEY (2053 aa)) forms a coiled coil. Ser-266 is modified (phosphoserine). Asn-585 and Asn-1612 each carry an N-linked (GlcNAc...) asparagine glycan. The region spanning 2168–2215 (LFGEPTEFEYLRKVLFEYMMGRETKTMAKVITTVLKFPDDQTQKILER) is the GRIP domain. Residue Thr-2223 is modified to Phosphothreonine.

As to quaternary structure, homodimer. Interacts with RAB6A. Interacts with GTP-bound ARL1 and ARL3. Interacts with MACF1. Directly interacts with TBC1D23. Interacts with FAM91A1; this interaction may be mediated by TBC1D23.

It is found in the cytoplasm. The protein resides in the golgi apparatus membrane. It localises to the golgi apparatus. Its subcellular location is the trans-Golgi network membrane. In terms of biological role, involved in vesicular trafficking at the Golgi apparatus level. May play a role in delivery of transport vesicles containing GPI-linked proteins from the trans-Golgi network through its interaction with MACF1. Involved in endosome-to-Golgi trafficking. The chain is Golgin subfamily A member 4 (GOLGA4) from Homo sapiens (Human).